A 482-amino-acid chain; its full sequence is Carbamoyl phosphate synthase large chain, N-terminal section (482 aa).

The segment at 1–398 (MESIKKVMVF…ALQKAIRSLD (398 aa)) is carboxyphosphate synthetic domain. ATP contacts are provided by Arg126, Arg166, Gly172, Gly173, Glu205, Val207, Glu212, Gly238, Ile239, His240, Gln281, and Glu295. The ATP-grasp domain maps to 130-324 (AEAMAEINEP…IARIAAKIAI (195 aa)). Mg(2+) is bound by residues Gln281, Glu295, and Asn297. Residues Gln281, Glu295, and Asn297 each coordinate Mn(2+).

Belongs to the CarB family. Composed of two chains; the small (or glutamine) chain promotes the hydrolysis of glutamine to ammonia, which is used by the large (or ammonia) chain to synthesize carbamoyl phosphate. Tetramer of heterodimers (alpha,beta)4. It depends on Mg(2+) as a cofactor. Mn(2+) serves as cofactor.

It carries out the reaction hydrogencarbonate + L-glutamine + 2 ATP + H2O = carbamoyl phosphate + L-glutamate + 2 ADP + phosphate + 2 H(+). The catalysed reaction is hydrogencarbonate + NH4(+) + 2 ATP = carbamoyl phosphate + 2 ADP + phosphate + 2 H(+). It functions in the pathway amino-acid biosynthesis; L-arginine biosynthesis; carbamoyl phosphate from bicarbonate: step 1/1. The protein operates within pyrimidine metabolism; UMP biosynthesis via de novo pathway; (S)-dihydroorotate from bicarbonate: step 1/3. Large subunit of the glutamine-dependent carbamoyl phosphate synthetase (CPSase). CPSase catalyzes the formation of carbamoyl phosphate from the ammonia moiety of glutamine, carbonate, and phosphate donated by ATP, constituting the first step of 2 biosynthetic pathways, one leading to arginine and/or urea and the other to pyrimidine nucleotides. The large subunit (synthetase) binds the substrates ammonia (free or transferred from glutamine from the small subunit), hydrogencarbonate and ATP and carries out an ATP-coupled ligase reaction, activating hydrogencarbonate by forming carboxy phosphate which reacts with ammonia to form carbamoyl phosphate. This is Carbamoyl phosphate synthase large chain, N-terminal section (carB1) from Methanocaldococcus jannaschii (strain ATCC 43067 / DSM 2661 / JAL-1 / JCM 10045 / NBRC 100440) (Methanococcus jannaschii).